Consider the following 213-residue polypeptide: Probable transaldolase (213 aa).

Lys-83 acts as the Schiff-base intermediate with substrate in catalysis.

Belongs to the transaldolase family. Type 3B subfamily.

The protein resides in the cytoplasm. It carries out the reaction D-sedoheptulose 7-phosphate + D-glyceraldehyde 3-phosphate = D-erythrose 4-phosphate + beta-D-fructose 6-phosphate. Its pathway is carbohydrate degradation; pentose phosphate pathway; D-glyceraldehyde 3-phosphate and beta-D-fructose 6-phosphate from D-ribose 5-phosphate and D-xylulose 5-phosphate (non-oxidative stage): step 2/3. Transaldolase is important for the balance of metabolites in the pentose-phosphate pathway. In Oceanobacillus iheyensis (strain DSM 14371 / CIP 107618 / JCM 11309 / KCTC 3954 / HTE831), this protein is Probable transaldolase.